A 47-amino-acid polypeptide reads, in one-letter code: uncharacterized protein (47 aa).

This is an uncharacterized protein from Escherichia coli.